Consider the following 342-residue polypeptide: Molybdate/tungstate-binding protein WtpA (342 aa).

The first 24 residues, 1–24 (MHIGGGVVKIRILILLMLALFLLG), serve as a signal peptide directing secretion. Residues 41-42 (GS), serine 70, 153-155 (DPC), glutamate 218, and tyrosine 236 each bind molybdate. Residues 41–42 (GS), serine 70, 153–155 (DPC), glutamate 218, and tyrosine 236 contribute to the tungstate site.

It belongs to the bacterial solute-binding protein 1 family. WtpA subfamily. As to quaternary structure, the complex is composed of two ATP-binding proteins (WtpC), two transmembrane proteins (WtpB) and a solute-binding protein (WtpA).

Its subcellular location is the cell membrane. Its function is as follows. Part of the ABC transporter complex WtpABC involved in molybdate/tungstate import. Binds tungstate and molybdate. The chain is Molybdate/tungstate-binding protein WtpA (wtpA) from Archaeoglobus fulgidus (strain ATCC 49558 / DSM 4304 / JCM 9628 / NBRC 100126 / VC-16).